A 424-amino-acid chain; its full sequence is Serine--tRNA ligase (424 aa).

230–232 (TAE) contacts L-serine. Residue 261–263 (RSE) participates in ATP binding. Glu-284 is a binding site for L-serine. Position 348–351 (348–351 (EISS)) interacts with ATP. Ser-384 contacts L-serine.

The protein belongs to the class-II aminoacyl-tRNA synthetase family. Type-1 seryl-tRNA synthetase subfamily. As to quaternary structure, homodimer. The tRNA molecule binds across the dimer.

It is found in the cytoplasm. It carries out the reaction tRNA(Ser) + L-serine + ATP = L-seryl-tRNA(Ser) + AMP + diphosphate + H(+). It catalyses the reaction tRNA(Sec) + L-serine + ATP = L-seryl-tRNA(Sec) + AMP + diphosphate + H(+). It functions in the pathway aminoacyl-tRNA biosynthesis; selenocysteinyl-tRNA(Sec) biosynthesis; L-seryl-tRNA(Sec) from L-serine and tRNA(Sec): step 1/1. In terms of biological role, catalyzes the attachment of serine to tRNA(Ser). Is also able to aminoacylate tRNA(Sec) with serine, to form the misacylated tRNA L-seryl-tRNA(Sec), which will be further converted into selenocysteinyl-tRNA(Sec). The polypeptide is Serine--tRNA ligase (Desulfatibacillum aliphaticivorans).